A 214-amino-acid polypeptide reads, in one-letter code: Large ribosomal subunit protein uL16-like (214 aa).

This sequence belongs to the universal ribosomal protein uL16 family. As to quaternary structure, component of a male germ cell-specific 60S large ribosomal subunit (LSU), which contains RPL10L and RPL39L, instead of RPL10 and RPL39 paralogs. The composition of the rest of the complex is similar to classical ribosomes. In terms of tissue distribution, testis-specific.

The protein localises to the cytoplasm. Testis-specific component of the ribosome, which is required for the transition from prophase to metaphase in male meiosis I. Compensates for the inactivated X-linked RPL10 paralog during spermatogenesis. The ribosome is a large ribonucleoprotein complex responsible for the synthesis of proteins in the cell. The male germ cell-specific ribosome displays a ribosomal polypeptide exit tunnel of distinct size and charge states compared with the classical ribosome. It is responsible for regulating the biosynthesis and folding of a subset of male germ-cell-specific proteins that are essential for the formation of sperm. The polypeptide is Large ribosomal subunit protein uL16-like (Mus musculus (Mouse)).